The primary structure comprises 408 residues: E3 ubiquitin-protein ligase At1g12760 (408 aa).

A disordered region spans residues 1–52; the sequence is MSTETTTGNSSLIPASSSSSSSDAIDPAPLLFNGDDNEGNNGGGGGERRSVR. The span at 10–34 shows a compositional bias: low complexity; that stretch reads SSLIPASSSSSSSDAIDPAPLLFNG. 2 consecutive transmembrane segments (helical) span residues 100-120 and 133-153; these read VVVL…AILV and VWLL…CVEY. The tract at residues 160 to 195 is disordered; the sequence is RTNRTTTTTPPRSRSSSSSSSSSSLEEEALGSRRNS. Residues 163–183 are compositionally biased toward low complexity; sequence RTTTTTPPRSRSSSSSSSSSS. 3 helical membrane-spanning segments follow: residues 219–239, 254–274, and 275–295; these read ANTM…SAGG, IVFL…ACVI, and GIAV…VADQ. The RING-type; atypical zinc-finger motif lies at 353–394; that stretch reads CCICLSAYEDGTELRELPCGHHFHCSCVDKWLYINATCPLCK.

It localises to the membrane. It catalyses the reaction S-ubiquitinyl-[E2 ubiquitin-conjugating enzyme]-L-cysteine + [acceptor protein]-L-lysine = [E2 ubiquitin-conjugating enzyme]-L-cysteine + N(6)-ubiquitinyl-[acceptor protein]-L-lysine.. Its pathway is protein modification; protein ubiquitination. Functionally, mediates E2-dependent protein ubiquitination in vitro. In Arabidopsis thaliana (Mouse-ear cress), this protein is E3 ubiquitin-protein ligase At1g12760.